The following is a 314-amino-acid chain: Cathepsin L 1 (314 aa).

An N-terminal signal peptide occupies residues 1 to 24; the sequence is MMLLGASLYLNNTQEVSDEIDTAN. Residues 25–109 constitute a propeptide, activation peptide; that stretch reads LYANWKMKYN…NAANSNFQYK (85 aa). 3 disulfide bridges follow: cysteine 132–cysteine 175, cysteine 166–cysteine 207, and cysteine 259–cysteine 302. Cysteine 135 is an active-site residue. Catalysis depends on residues histidine 265 and asparagine 282.

This sequence belongs to the peptidase C1 family.

It is found in the secreted. It catalyses the reaction Specificity close to that of papain. As compared to cathepsin B, cathepsin L exhibits higher activity toward protein substrates, but has little activity on Z-Arg-Arg-NHMec, and no peptidyl-dipeptidase activity.. Functionally, may be involved in extracellular digestion. The sequence is that of Cathepsin L 1 from Paramecium tetraurelia.